Reading from the N-terminus, the 205-residue chain is 2-dehydro-3-deoxy-6-phosphogalactonate aldolase (205 aa).

Arginine 14 contributes to the 2-dehydro-3-deoxy-6-phospho-D-galactonate binding site. Catalysis depends on glutamate 37, which acts as the Proton donor/acceptor. 2-dehydro-3-deoxy-6-phospho-D-galactonate contacts are provided by threonine 66, lysine 126, glycine 156, glycine 176, and serine 177. The active-site Schiff-base intermediate with substrate is lysine 126.

It belongs to the KHG/KDPG aldolase family. As to quaternary structure, homotrimer.

It catalyses the reaction 2-dehydro-3-deoxy-6-phospho-D-galactonate = D-glyceraldehyde 3-phosphate + pyruvate. Its pathway is carbohydrate acid metabolism; D-galactonate degradation; D-glyceraldehyde 3-phosphate and pyruvate from D-galactonate: step 3/3. In terms of biological role, involved in the degradation of galactose via the DeLey-Doudoroff pathway. Catalyzes the reversible, stereospecific retro-aldol cleavage of 2-keto-3-deoxy-6-phosphogalactonate (KDPGal) to pyruvate and D-glyceraldehyde-3-phosphate. In the synthetic direction, it catalyzes the addition of pyruvate to electrophilic aldehydes with re-facial selectivity. It can use a limited number of aldehyde substrates, including D-glyceraldehyde-3-phosphate (natural substrate), D-glyceraldehyde, glycolaldehyde, 2-pyridinecarboxaldehyde, D-ribose, D-erythrose and D-threose. It efficiently catalyzes aldol addition only using pyruvate as the nucleophilic component and accepts both stereochemical configurations at C2 of the electrophile. The sequence is that of 2-dehydro-3-deoxy-6-phosphogalactonate aldolase (dgoA) from Escherichia coli (strain K12).